Consider the following 287-residue polypeptide: MSLPLGVPRRAFSYDDALEDTAPMTPPPADLCANVLWKQPVIPERKYQELAKIEEGDANMNAPVITPSSSTESVNKVPVVKAKATHIIMNSLITKQTQESIQRFEQQAGLRDAGYTPHKGLTAEETKYHRVAEAVHKLKMQSGETTKDDKQTSSAQSTPSSTPHSSPKHKNRGWFSQGSSASITAPDFVAMEAGGDRLPSERWSFFGPKAIQKSTNDPGGFTIQSYKGAQKPSPMELMRAQATRMTEDPVTFKPPKMDIPVTEGRKQSSHSHNIKPRDLNVLTPTGF.

The Flavin-containing monooxygenase motif motif lies at 50–60 (LAKIEEGDANM). Disordered regions lie at residues 139 to 179 (KMQS…SQGS) and 245 to 287 (MTED…PTGF). A compositionally biased stretch (low complexity) spans 152–165 (TSSAQSTPSSTPHS).

This sequence belongs to the P33MONOX family.

Its subcellular location is the cytoplasm. Functionally, potential NADPH-dependent oxidoreductase. May be involved in the regulation of neuronal survival, differentiation and axonal outgrowth. In Gallus gallus (Chicken), this protein is Putative monooxygenase p33MONOX (P33MONOX).